Here is a 249-residue protein sequence, read N- to C-terminus: DNA repair protein RecO (249 aa).

This sequence belongs to the RecO family.

Involved in DNA repair and RecF pathway recombination. This Lactobacillus delbrueckii subsp. bulgaricus (strain ATCC BAA-365 / Lb-18) protein is DNA repair protein RecO.